Here is a 276-residue protein sequence, read N- to C-terminus: uncharacterized protein (276 aa).

The segment at 1–20 (MMSDEQHQGGDGQTTTNTNT) is disordered.

This is an uncharacterized protein from Dictyostelium discoideum (Social amoeba).